Here is a 310-residue protein sequence, read N- to C-terminus: tRNA-cytidine(32) 2-sulfurtransferase (310 aa).

The short motif at 48–53 (SGGKDS) is the PP-loop motif element. [4Fe-4S] cluster contacts are provided by C123, C126, and C214.

This sequence belongs to the TtcA family. Homodimer. Mg(2+) is required as a cofactor. [4Fe-4S] cluster serves as cofactor.

Its subcellular location is the cytoplasm. The enzyme catalyses cytidine(32) in tRNA + S-sulfanyl-L-cysteinyl-[cysteine desulfurase] + AH2 + ATP = 2-thiocytidine(32) in tRNA + L-cysteinyl-[cysteine desulfurase] + A + AMP + diphosphate + H(+). It participates in tRNA modification. In terms of biological role, catalyzes the ATP-dependent 2-thiolation of cytidine in position 32 of tRNA, to form 2-thiocytidine (s(2)C32). The sulfur atoms are provided by the cysteine/cysteine desulfurase (IscS) system. This Vibrio vulnificus (strain YJ016) protein is tRNA-cytidine(32) 2-sulfurtransferase.